The primary structure comprises 178 residues: Protamine-like protein (178 aa).

Disordered regions lie at residues 1-27 (PSTTSSKSPKRRAKSPRRKRTGPTVSD) and 77-178 (SVVK…RAKK). 2 stretches are compositionally biased toward basic residues: residues 8–21 (SPKRRAKSPRRKRT) and 94–178 (PRRR…RAKK). One can recognise an H15 domain in the interval 21–89 (TGPTVSDLIL…KAKGFYKLNK (69 aa)).

As to expression, male germ cells.

Its subcellular location is the nucleus. The protein localises to the chromosome. Replaces histones in the chromatin of sperm during the haploid phase of spermatogenesis. Compacts sperm DNA into a highly condensed, stable and inactive complex. The protein is Protamine-like protein of Mullus surmuletus (Striped red mullet).